A 964-amino-acid polypeptide reads, in one-letter code: MAESSAATQSPSVSSSSSGAEPSALGGGGGSPGACPALGAKSCGSSCADSFVSSSSSQPVSIFSTSQAGLSSLCSDEPPSKSMTSSFLSSSEIHNPDPTTPLGEKSETLGSQFVLAKGKDPLVLLDKKKLDSPQGTNKDRVDAPVSLATGIPCSHPSIPDSFPEQPAFLSKEIGPAEEWVVKDQEPKNPNKVPDGEDRSALDFGQSKAEHICTYSLSPSELPVASVEKDSPESPFEVIIDKATFDREFKDLYKENPNDLGGWAAHGDRESPADLLEMNDKLFPLRNKEAGRYPSSVLLGRQFSHTTAALEEVSRCVNDMHNFTNEILTWDLDPQAKQQANKTSCTTESTGLDRSELRSEIPVINLKTNPQQKMPVCSFNGSTPITKSTGDWTEAFTEGKPVRDYLSSTKEAGGNGVPGSSQLHSELPGSMPEKWVSGSGAATVEVTLPNLRGAWPNSVMGEVTEVDSSGESDDTVIEDITEKPDSLPSAAAKTSEREIKETPSRETVRSEMCENSEQPQAQPETPTQKSLEGEVASQVPNTLNEVTPEKLDMTNNPKVCSAAPPSVLNETGFSLTVPASAKLESLLGKYVEDTDGSSPEDLMAVLTGAEEKGIVDKEEGDVLEAVLEKIADFKNTLPVELLHESELSGSETKNIKSKYSEDSRETTGGAPTMSPDLEQEQLTIRAIKELGERQAEKVQDEGISSGGKLKQTFAPQSGPQSSSDILEHTDVKTGSDLGIPKNPTIIKNTRIDSISSLTKTEMVNKNVLARLLSDFPVHDLIFWRDVKKTGFVFGTTLIMLLSLAAFSVISVVSYLILALLSVTISFRVYKSVIQAVQKSEEGHPFKAYLDVDITLSSEAFHNYMNAAMVHVNKALKLIIRLFLVEDLVDSLKLAVFMWLMTYVGAVFNGITLLILAELLVFSVPIVYEKYKTQIDHYVGIARDQTKSIVEKIQAKLPGIAKKKAE.

Positions 1–24 are enriched in low complexity; it reads MAESSAATQSPSVSSSSSGAEPSA. 3 disordered regions span residues 1–32, 68–109, and 179–200; these read MAES…GGSP, AGLS…SETL, and WVVK…DRSA. Ala-2 is subject to N-acetylalanine. Residues 2-795 lie on the Cytoplasmic side of the membrane; sequence AESSAATQSP…KKTGFVFGTT (794 aa). Ser-31 bears the Phosphoserine mark. A compositionally biased stretch (low complexity) spans 80–91; sequence SKSMTSSFLSSS. Phosphoserine occurs at positions 217, 225, 230, 233, 270, 303, and 429. Positions 479–536 are disordered; it reads ITEKPDSLPSAAAKTSEREIKETPSRETVRSEMCENSEQPQAQPETPTQKSLEGEVAS. Positions 493–511 are enriched in basic and acidic residues; the sequence is TSEREIKETPSRETVRSEM. Positions 516–527 are enriched in low complexity; it reads EQPQAQPETPTQ. At Ser-529 the chain carries Phosphoserine. Residue Thr-593 is modified to Phosphothreonine. Phosphoserine occurs at positions 596, 597, and 673. Disordered stretches follow at residues 645–674 and 697–723; these read ELSG…TMSP and VQDE…SSSD. The segment covering 712–723 has biased composition (polar residues); it reads FAPQSGPQSSSD. The Reticulon domain occupies 776–964; the sequence is VHDLIFWRDV…LPGIAKKKAE (189 aa). Residues 796-819 constitute an intramembrane region (helical); it reads LIMLLSLAAFSVISVVSYLILALL. Topologically, residues 820-876 are cytoplasmic; sequence SVTISFRVYKSVIQAVQKSEEGHPFKAYLDVDITLSSEAFHNYMNAAMVHVNKALKL. The segment at residues 877 to 899 is an intramembrane region (helical); sequence IIRLFLVEDLVDSLKLAVFMWLM. The Cytoplasmic segment spans residues 900-903; that stretch reads TYVG. Residues 904–926 constitute an intramembrane region (helical); the sequence is AVFNGITLLILAELLVFSVPIVY. The interaction with FADD stretch occupies residues 919–964; sequence VFSVPIVYEKYKTQIDHYVGIARDQTKSIVEKIQAKLPGIAKKKAE. Topologically, residues 927-964 are cytoplasmic; the sequence is EKYKTQIDHYVGIARDQTKSIVEKIQAKLPGIAKKKAE. The segment at 932–934 is interaction with BACE1; that stretch reads QID.

In terms of assembly, homodimer. Interacts with RTN4. Isoform 3 interacts with BACE1, BACE2, BCL2 and FADD. Interacts with ATL1 and ATL2. Isoform 3 interacts with TMEM33. Interacts with ZFYVE27 and with KIF5A in a ZFYVE27-dependent manner. Interacts with RIGI. Interacts with TRIM25. In terms of tissue distribution, isoform 1, isoform 3, isoform 4 and isoform 5 are expressed in spinal cord. Isoform 1 is present in brain, where it is expressed in the neurons of cerebral cortex, hippocampus, hypothalamus and cerebellum (at protein level).

It is found in the endoplasmic reticulum membrane. Its subcellular location is the golgi apparatus membrane. Its function is as follows. May be involved in membrane trafficking in the early secretory pathway. Inhibits BACE1 activity and amyloid precursor protein processing. May induce caspase-8 cascade and apoptosis. May favor BCL2 translocation to the mitochondria upon endoplasmic reticulum stress. Induces the formation of endoplasmic reticulum tubules. Also acts as an inflammation-resolving regulator by interacting with both TRIM25 and RIGI, subsequently impairing RIGI 'Lys-63'-linked polyubiquitination leading to IRF3 and NF-kappa-B inhibition. The polypeptide is Reticulon-3 (Rtn3) (Mus musculus (Mouse)).